A 532-amino-acid polypeptide reads, in one-letter code: Pyruvate kinase (532 aa).

Arginine 63 is a substrate binding site. Residues asparagine 65, serine 67, aspartate 99, and threonine 100 each contribute to the K(+) site. ATP is bound at residue 65 to 68; it reads NFSH. Residues arginine 106 and lysine 191 each contribute to the ATP site. Residue glutamate 256 coordinates Mg(2+). Glycine 279, aspartate 280, and threonine 312 together coordinate substrate. Aspartate 280 provides a ligand contact to Mg(2+).

This sequence belongs to the pyruvate kinase family. In terms of assembly, homotetramer. Mg(2+) serves as cofactor. The cofactor is K(+).

It catalyses the reaction pyruvate + ATP = phosphoenolpyruvate + ADP + H(+). Its pathway is carbohydrate degradation; glycolysis; pyruvate from D-glyceraldehyde 3-phosphate: step 5/5. In Agaricus bisporus (White button mushroom), this protein is Pyruvate kinase (pkiA).